Consider the following 444-residue polypeptide: Docking protein 3 (444 aa).

The PH domain maps to 7–123 (PVKDGLLYQQ…WMDPICQLAF (117 aa)). Residues 47–66 (DVRDGGLGPGGDRPAGPGRR) form a disordered region. Ser-138 bears the Phosphoserine mark. One can recognise an IRS-type PTB domain in the interval 157–261 (EVAEFPVVVQ…ARQRERLPEL (105 aa)). Residues Ser-274, Ser-308, and Ser-314 each carry the phosphoserine modification. Phosphotyrosine is present on Tyr-325. Residues 354–390 (GLSNGGPEAQEGPPGGRSPLGSPIYHNSEELSWPGSA) are disordered. Over residues 358-376 (GGPEAQEGPPGGRSPLGSP) the composition is skewed to low complexity. Ser-371 bears the Phosphoserine mark.

Belongs to the DOK family. Type A subfamily. As to quaternary structure, on tyrosine phosphorylation, interacts with CSK and INPP5D/SHIP1 via their SH2 domains. Binds ABL1 through the PTB domain and in a kinase-dependent manner. Does not interact with RasGAP. In terms of processing, constitutively tyrosine-phosphorylated. On IL2 stimulation, phosphorylated on C-terminal tyrosine residues possibly by Src kinases. Can also be phosphorylated by ABL1 kinase.

Its subcellular location is the cytoplasm. The protein localises to the cell membrane. Its function is as follows. DOK proteins are enzymatically inert adaptor or scaffolding proteins. They provide a docking platform for the assembly of multimolecular signaling complexes. DOK3 is a negative regulator of JNK signaling in B-cells through interaction with INPP5D/SHIP1. May modulate ABL1 function. This chain is Docking protein 3 (Dok3), found in Rattus norvegicus (Rat).